Reading from the N-terminus, the 151-residue chain is Transcriptional repressor NrdR (151 aa).

A zinc finger lies at cysteine 3–cysteine 34. The region spanning isoleucine 49–threonine 139 is the ATP-cone domain.

This sequence belongs to the NrdR family. It depends on Zn(2+) as a cofactor.

In terms of biological role, negatively regulates transcription of bacterial ribonucleotide reductase nrd genes and operons by binding to NrdR-boxes. This chain is Transcriptional repressor NrdR, found in Clostridium botulinum (strain 657 / Type Ba4).